We begin with the raw amino-acid sequence, 361 residues long: S-adenosylmethionine:tRNA ribosyltransferase-isomerase (361 aa).

The protein belongs to the QueA family. Monomer.

The protein resides in the cytoplasm. It catalyses the reaction 7-aminomethyl-7-carbaguanosine(34) in tRNA + S-adenosyl-L-methionine = epoxyqueuosine(34) in tRNA + adenine + L-methionine + 2 H(+). Its pathway is tRNA modification; tRNA-queuosine biosynthesis. Functionally, transfers and isomerizes the ribose moiety from AdoMet to the 7-aminomethyl group of 7-deazaguanine (preQ1-tRNA) to give epoxyqueuosine (oQ-tRNA). The sequence is that of S-adenosylmethionine:tRNA ribosyltransferase-isomerase from Afipia carboxidovorans (strain ATCC 49405 / DSM 1227 / KCTC 32145 / OM5) (Oligotropha carboxidovorans).